Reading from the N-terminus, the 129-residue chain is LEM domain-containing protein 1 (129 aa).

An LEM domain is found at 1–45 (MVDVKCLSDYELHKHLMKLGFTPGPILPSTRKTYEKKLVQLLASP). The disordered stretch occupies residues 45-129 (PPWKPPVMKR…RAPRTTSHGA (85 aa)). Residues 83–97 (SLKKTTLDATRDPRA) show a composition bias toward basic and acidic residues.

This Mus musculus (Mouse) protein is LEM domain-containing protein 1 (Lemd1).